Here is a 281-residue protein sequence, read N- to C-terminus: Phosphatidylglycerol--prolipoprotein diacylglyceryl transferase (281 aa).

The next 4 helical transmembrane spans lie at 23-43 (IGPL…LFAW), 71-91 (FVIW…VLFY), 107-127 (WDGG…MILF), and 133-153 (ILVW…LGVV). Arg154 is an a 1,2-diacyl-sn-glycero-3-phospho-(1'-sn-glycerol) binding site. Helical transmembrane passes span 189-209 (LYEA…LVWG), 217-237 (GFVA…VEFF), and 247-267 (LFGG…LLGL).

Belongs to the Lgt family.

The protein localises to the cell inner membrane. It catalyses the reaction L-cysteinyl-[prolipoprotein] + a 1,2-diacyl-sn-glycero-3-phospho-(1'-sn-glycerol) = an S-1,2-diacyl-sn-glyceryl-L-cysteinyl-[prolipoprotein] + sn-glycerol 1-phosphate + H(+). It participates in protein modification; lipoprotein biosynthesis (diacylglyceryl transfer). Its function is as follows. Catalyzes the transfer of the diacylglyceryl group from phosphatidylglycerol to the sulfhydryl group of the N-terminal cysteine of a prolipoprotein, the first step in the formation of mature lipoproteins. The chain is Phosphatidylglycerol--prolipoprotein diacylglyceryl transferase from Brucella canis (strain ATCC 23365 / NCTC 10854 / RM-666).